The primary structure comprises 381 residues: cAMP-dependent protein kinase type I-beta regulatory subunit (381 aa).

Positions 1-136 (MASPSCFHSE…ALAKAISKNV (136 aa)) are dimerization and phosphorylation. Residue Ser-3 is modified to Phosphoserine. Tyr-21 carries the 3'-nitrotyrosine modification. Positions 66 to 88 (LARQKSNSQCDSHDEEISPTPPN) are disordered. Residues Ser-77 and Ser-83 each carry the phosphoserine modification. At Thr-85 the chain carries Phosphothreonine. The Pseudophosphorylation motif motif lies at 96-100 (RRGGV). Position 97 is an omega-N-methylarginine (Arg-97). 3',5'-cyclic AMP contacts are provided by residues 137-254 (LFSH…SKVS), Glu-202, Arg-211, 255-381 (ILES…SLTV), Glu-326, and Arg-335.

It belongs to the cAMP-dependent kinase regulatory chain family. In terms of assembly, the inactive holoenzyme is composed of two regulatory chains and two catalytic chains. Activation by cAMP releases the two active catalytic monomers and the regulatory dimer. Interacts with PRKX; regulates this cAMP-dependent protein kinase. Interacts with smAKAP; this interaction may target PRKAR1B to the plasma membrane. Post-translationally, the pseudophosphorylation site binds to the substrate-binding region of the catalytic chain, resulting in the inhibition of its activity. In terms of tissue distribution, four types of regulatory chains are found: I-alpha, I-beta, II-alpha, and II-beta. Their expression varies among tissues and is in some cases constitutive and in others inducible.

Its subcellular location is the cell membrane. Functionally, regulatory subunit of the cAMP-dependent protein kinases involved in cAMP signaling in cells. This chain is cAMP-dependent protein kinase type I-beta regulatory subunit (Prkar1b), found in Mus musculus (Mouse).